The primary structure comprises 78 residues: Pigment-dispersing hormone 2 peptides (78 aa).

A signal peptide spans 1–21 (MRSGVFVAVLVVVVFALLTQG). Residue Ala75 is modified to Alanine amide.

This sequence belongs to the arthropod PDH family. As to expression, eyestalk sinus gland.

It is found in the secreted. In terms of biological role, the pigment-dispersing hormone causes the migration of the distal retinal pigment into the proximal end of the pigment chromatophore cells and thus decreases the amount of light entering the retinulas. May also function as a neurotransmitter and/or neuromodulator. This Callinectes sapidus (Blue crab) protein is Pigment-dispersing hormone 2 peptides (PDH2).